A 322-amino-acid chain; its full sequence is tRNA-dihydrouridine synthase B (322 aa).

Residues 16-18 and Gln-70 each bind FMN; that span reads PMA. Catalysis depends on Cys-100, which acts as the Proton donor. FMN-binding positions include Lys-139, 200 to 202, and 224 to 225; these read NGD and GR.

This sequence belongs to the Dus family. DusB subfamily. FMN serves as cofactor.

It carries out the reaction a 5,6-dihydrouridine in tRNA + NAD(+) = a uridine in tRNA + NADH + H(+). The enzyme catalyses a 5,6-dihydrouridine in tRNA + NADP(+) = a uridine in tRNA + NADPH + H(+). In terms of biological role, catalyzes the synthesis of 5,6-dihydrouridine (D), a modified base found in the D-loop of most tRNAs, via the reduction of the C5-C6 double bond in target uridines. In Vibrio parahaemolyticus serotype O3:K6 (strain RIMD 2210633), this protein is tRNA-dihydrouridine synthase B.